The following is a 391-amino-acid chain: AN1-type zinc finger and UBX domain-containing protein DDB_G0268260 (391 aa).

The span at 1–16 shows a compositional bias: low complexity; sequence MQQQSPPTAPQQQQQQ. Positions 1-20 are disordered; that stretch reads MQQQSPPTAPQQQQQQQRER. AN1-type zinc fingers lie at residues 26–74 and 118–166; these read DHIG…QREN and APKS…IINS. Residues C32, C37, C47, C50, C55, H58, H64, C66, C124, C129, C139, C142, C147, H150, H156, and C158 each coordinate Zn(2+). A compositionally biased stretch (low complexity) spans 185-236; it reads NINNNINNNKNNNNNNNNNNNNNNNNNNNNNNNNNNNNNNNNNNNNNSNNNN. Residues 185–240 are disordered; that stretch reads NINNNINNNKNNNNNNNNNNNNNNNNNNNNNNNNNNNNNNNNNNNNNSNNNNKLIY. Positions 278–356 constitute a UBX domain; the sequence is SSEEIGEIGI…GLLPVSTLYM (79 aa).

This Dictyostelium discoideum (Social amoeba) protein is AN1-type zinc finger and UBX domain-containing protein DDB_G0268260.